Here is a 146-residue protein sequence, read N- to C-terminus: DNA protection during starvation protein 2 (146 aa).

3 residues coordinate Fe cation: H27, D54, and E58.

The protein belongs to the Dps family. In terms of assembly, the 12 subunits form a hollow sphere into which the mineral iron core of up to 500 Fe(3+) can be deposited. Homododecamer.

Its subcellular location is the cytoplasm. The enzyme catalyses 2 Fe(2+) + H2O2 + 2 H(+) = 2 Fe(3+) + 2 H2O. In terms of biological role, protects DNA from oxidative damage by sequestering intracellular Fe(2+) ion and storing it in the form of Fe(3+) oxyhydroxide mineral. One hydrogen peroxide oxidizes two Fe(2+) ions, which prevents hydroxyl radical production by the Fenton reaction. It is capable of binding and sequestering Fe(2+) ion. Does not bind DNA. The sequence is that of DNA protection during starvation protein 2 (dps2) from Bacillus anthracis.